The sequence spans 1088 residues: RNA-directed RNA polymerase (1088 aa).

One can recognise a RdRp catalytic domain in the interval 501–687; it reads LSYGDVTRFL…AKRYIAGGKI (187 aa).

It belongs to the reoviridae RNA-directed RNA polymerase family. In terms of assembly, interacts with VP3 (Potential). Interacts with VP2; this interaction activates VP1. Interacts with NSP5; this interaction is probably necessary for the formation of functional virus factories. Interacts with NSP2; this interaction is weak. Mg(2+) serves as cofactor.

The protein resides in the virion. The catalysed reaction is RNA(n) + a ribonucleoside 5'-triphosphate = RNA(n+1) + diphosphate. In terms of biological role, RNA-directed RNA polymerase that is involved in both transcription and genome replication. Together with VP3 capping enzyme, forms an enzyme complex positioned near the channels situated at each of the five-fold vertices of the core. Following infection, the outermost layer of the virus is lost, leaving a double-layered particle (DLP) made up of the core and VP6 shell. VP1 then catalyzes the transcription of fully conservative plus-strand genomic RNAs that are extruded through the DLP's channels into the cytoplasm where they function as mRNAs for translation of viral proteins. One copy of each of the viral (+)RNAs is also recruited during core assembly, together with newly synthesized polymerase complexes and VP2. The polymerase of these novo-formed particles catalyzes the synthesis of complementary minus-strands leading to dsRNA formation. To do so, the polymerase specifically recognizes and binds 4 bases 5'-UGUG-3' in the conserved 3'-sequence of plus-strand RNA templates. VP2 presumably activates the autoinhibited VP1-RNA complex to coordinate packaging and genome replication. Once dsRNA synthesis is complete, the polymerase switches to the transcriptional mode, thus providing secondary transcription. The polypeptide is RNA-directed RNA polymerase (Homo sapiens (Human)).